A 152-amino-acid polypeptide reads, in one-letter code: 3-hydroxyacyl-[acyl-carrier-protein] dehydratase FabZ (152 aa).

Residue histidine 54 is part of the active site.

It belongs to the thioester dehydratase family. FabZ subfamily.

Its subcellular location is the cytoplasm. It carries out the reaction a (3R)-hydroxyacyl-[ACP] = a (2E)-enoyl-[ACP] + H2O. In terms of biological role, involved in unsaturated fatty acids biosynthesis. Catalyzes the dehydration of short chain beta-hydroxyacyl-ACPs and long chain saturated and unsaturated beta-hydroxyacyl-ACPs. The protein is 3-hydroxyacyl-[acyl-carrier-protein] dehydratase FabZ of Buchnera aphidicola subsp. Schizaphis graminum (strain Sg).